Here is a 250-residue protein sequence, read N- to C-terminus: Ribosomal RNA small subunit methyltransferase J (250 aa).

S-adenosyl-L-methionine contacts are provided by residues 101–102 (RD), 117–118 (ER), 153–154 (SS), and D171.

Belongs to the methyltransferase superfamily. RsmJ family.

It is found in the cytoplasm. It catalyses the reaction guanosine(1516) in 16S rRNA + S-adenosyl-L-methionine = N(2)-methylguanosine(1516) in 16S rRNA + S-adenosyl-L-homocysteine + H(+). Its function is as follows. Specifically methylates the guanosine in position 1516 of 16S rRNA. In Shigella flexneri serotype 5b (strain 8401), this protein is Ribosomal RNA small subunit methyltransferase J.